A 377-amino-acid polypeptide reads, in one-letter code: Short chain dehydrogenase gsfE (377 aa).

NADP(+)-binding residues include Asp89, Gln121, Tyr226, Ala266, and Ser268. The active-site Proton donor is Tyr226.

It belongs to the short-chain dehydrogenases/reductases (SDR) family. Highly divergent.

It carries out the reaction dehydrogriseofulvin + NADPH + H(+) = griseofulvin + NADP(+). The protein operates within secondary metabolite biosynthesis; terpenoid biosynthesis. Short chain dehydrogenase; part of the gene cluster that mediates the biosynthesis of griseofulvin, an important antifungal drug that has been in use for a long time for treating dermatophyte infections. The first step of the pathway is the formation of the heptaketide backbone by gsfA which is initiated by priming with acetyl-CoA, followed by sequential condensations of 6 malonyl-CoA units. The resulting benzophenone can undergo a spontaneous dehydration to form norlichexanthone. However, the true precursor for the griseofulvin biosynthesis is not norlichexanthone, but the heptaketide benzophenone that is O-methylated at 3-OH by gsfB to produce griseophenone D which is further methylated at 9-OH by gsfC to yield griseophenone C. Griseophenone C is then substrate of halogenase gsfI which is responsible for the regio-specific chlorination at the C13 position to form griseophenone B. The cytochrome P450 gsfF catalyzes the coupling of orcinol and phloroglucinol rings in griseophenone B to form desmethyl-dehydrogriseofulvin A which is further methylated at 5-OH by gsfD to yield dehydrogriseofulvin. Finally, gsfE performs stereospecific reduction of enone 18 of dehydrogriseofulvin to afford the final product griseofulvin. The protein is Short chain dehydrogenase gsfE of Penicillium aethiopicum.